The sequence spans 389 residues: Nuclear receptor subfamily 2 group F member 1-B (389 aa).

Residues 19-39 form a disordered region; that stretch reads DDQSAAGREHLQHRHSPKSAE. Positions 51 to 126 form a DNA-binding region, nuclear receptor; sequence HVECVVCGDK…VGMRREAVQR (76 aa). NR C4-type zinc fingers lie at residues 54-74 and 90-109; these read CVVC…CEGC and CRAN…CQYC. An NR LBD domain is found at 152–378; it reads YLSGYISLLL…TLIRDMLLSG (227 aa).

It belongs to the nuclear hormone receptor family. NR2 subfamily. In terms of tissue distribution, expressed the retina, where expression is restricted to the outer nuclear layer.

It is found in the nucleus. Its function is as follows. Putative transcription factor that is required in photoreceptor cells precursors during eye development. This chain is Nuclear receptor subfamily 2 group F member 1-B, found in Danio rerio (Zebrafish).